The sequence spans 227 residues: tRNA (guanine-N(7)-)-methyltransferase (227 aa).

S-adenosyl-L-methionine is bound by residues glutamate 58, glutamate 83, aspartate 110, and aspartate 132. The active site involves aspartate 132. Substrate-binding positions include lysine 136, aspartate 168, and 205–208 (TRFE).

It belongs to the class I-like SAM-binding methyltransferase superfamily. TrmB family.

It catalyses the reaction guanosine(46) in tRNA + S-adenosyl-L-methionine = N(7)-methylguanosine(46) in tRNA + S-adenosyl-L-homocysteine. It functions in the pathway tRNA modification; N(7)-methylguanine-tRNA biosynthesis. In terms of biological role, catalyzes the formation of N(7)-methylguanine at position 46 (m7G46) in tRNA. This Acidithiobacillus ferrooxidans (strain ATCC 23270 / DSM 14882 / CIP 104768 / NCIMB 8455) (Ferrobacillus ferrooxidans (strain ATCC 23270)) protein is tRNA (guanine-N(7)-)-methyltransferase.